The following is a 476-amino-acid chain: Zinc transporter SLC39A7 (476 aa).

Residues 7–27 (APHWVAVGLLTWAALGLLVAG) form a helical membrane-spanning segment. The span at 35-109 (HKDVEEDFHG…SHGHSHDSLH (75 aa)) shows a compositional bias: basic and acidic residues. Positions 35 to 131 (HKDVEEDFHG…HGTSREAGAP (97 aa)) are disordered. Residue histidine 73 is modified to Pros-methylhistidine. The segment covering 110–120 (HGGHGHAHREH) has biased composition (basic residues). Helical transmembrane passes span 146-166 (ALGA…LIPV), 177-197 (LQIL…LHLI), and 222-242 (GPIL…LVVE). Residues 249-320 (KGGHGHSHGH…QSPEEEKAGS (72 aa)) are disordered. The segment covering 257 to 292 (GHGDRHAHGDSHTHGDRHECSSKEKPSTEEEKEVGG) has biased composition (basic and acidic residues). Serine 283 is modified (phosphoserine). 2 helical membrane-spanning segments follow: residues 393–413 (VTAI…GGAV) and 417–437 (VAGG…FIYV).

The protein belongs to the ZIP transporter (TC 2.A.5) family. KE4/Catsup subfamily. Homodimer. Post-translationally, methylation at some His residue by METTL9 leads to reduced zinc-binding. Rapidly phosphorylated by CK2 following Zn(2+) treatment. This phosphorylation is required for efficient cytosolic Zn(2+) release. Widely expressed. Highly expressed in the intestinal crypts.

Its subcellular location is the endoplasmic reticulum membrane. The protein resides in the golgi apparatus. It localises to the cis-Golgi network membrane. It carries out the reaction Zn(2+)(in) = Zn(2+)(out). In terms of biological role, transports Zn(2+) from the endoplasmic reticulum (ER)/Golgi apparatus to the cytosol, playing an essential role in the regulation of cytosolic zinc levels. Acts as a gatekeeper of zinc release from intracellular stores, requiring post-translational activation by phosphorylation, resulting in activation of multiple downstream pathways leading to cell growth and proliferation. Has an essential role in B cell development and is required for proper B cell receptor signaling. Plays an important role in maintaining intestinal epithelial homeostasis and skin dermis development by regulating ER function. Controls cell signaling pathways involved in glucose metabolism in skeletal muscle. Has a protective role against ER stress in different biological contexts. Mediates Zn(2+)-induced ferroptosis. In Mus musculus (Mouse), this protein is Zinc transporter SLC39A7 (Slc39a7).